Reading from the N-terminus, the 93-residue chain is MDFWLVCYDVRDDKRRRKLAKLLEQRCQRVQYSVFECPLPEKVLTDLLHRRWLKELNLKEDSLRAYPLQRQSRSQAKIFGSPDLYEPPDFLIL.

Residue Asp9 coordinates Mg(2+).

Belongs to the CRISPR-associated endoribonuclease Cas2 protein family. In terms of assembly, homodimer, forms a heterotetramer with a Cas1 homodimer. Mg(2+) serves as cofactor.

Functionally, CRISPR (clustered regularly interspaced short palindromic repeat), is an adaptive immune system that provides protection against mobile genetic elements (viruses, transposable elements and conjugative plasmids). CRISPR clusters contain sequences complementary to antecedent mobile elements and target invading nucleic acids. CRISPR clusters are transcribed and processed into CRISPR RNA (crRNA). Functions as a ssRNA-specific endoribonuclease. Involved in the integration of spacer DNA into the CRISPR cassette. The polypeptide is CRISPR-associated endoribonuclease Cas2 2 (Synechocystis sp. (strain ATCC 27184 / PCC 6803 / Kazusa)).